Reading from the N-terminus, the 98-residue chain is Large ribosomal subunit protein uL23 (98 aa).

It belongs to the universal ribosomal protein uL23 family. As to quaternary structure, part of the 50S ribosomal subunit. Contacts protein L29, and trigger factor when it is bound to the ribosome.

In terms of biological role, one of the early assembly proteins it binds 23S rRNA. One of the proteins that surrounds the polypeptide exit tunnel on the outside of the ribosome. Forms the main docking site for trigger factor binding to the ribosome. The protein is Large ribosomal subunit protein uL23 of Caulobacter sp. (strain K31).